The following is a 39-amino-acid chain: SDSKIGNGCFGFPLDRIGSVSGLGCNRIMQNPPKKFSGE.

The cysteines at positions 9 and 25 are disulfide-linked.

Belongs to the natriuretic peptide family. In terms of tissue distribution, expressed by the venom gland.

It is found in the secreted. Its function is as follows. Snake venom natriuretic peptide that exhibits vasoactive and hypotensive activity. Produces a near complete relaxation in pre-contracted aortae by activating the natriuretic peptide receptor 1 (NPR1). Stimulates cGMP production through the natriuretic peptide receptor 1 (NPR1) with high potencies for the rat NPR1 (EC(50)=100 nM), and very weak potencies over human NPR1 (28% activation at 10 uM). In vivo, reduces both systolic and diastolic blood pressure with no effect on heart rate, when intravenously injected in conscious rabbits. Also enhances the bradycardia due to cardiac afferent stimulation (Bezold-Jarisch reflex). The chain is Natriuretic peptide TNPc from Oxyuranus microlepidotus (Inland taipan).